Here is a 222-residue protein sequence, read N- to C-terminus: Latexin (222 aa).

The 97-residue stretch at 1-97 (MEIPPTNYPA…NFTFEGETGK (97 aa)) folds into the Cystatin LXN-type 1 domain. Residue Lys-55 is modified to N6-acetyllysine. The segment at 98-117 (NPDEEDNTFYQRLKSMKEPL) is alpha-helical linker. The Cystatin LXN-type 2 domain occupies 118 to 222 (EAQNIPDNFG…SRLPKEVQLE (105 aa)).

It belongs to the protease inhibitor I47 (latexin) family. Highly expressed in heart, prostate, ovary, kidney, pancreas, and colon, moderate or low in other tissues including brain.

It is found in the cytoplasm. Hardly reversible, non-competitive, and potent inhibitor of CPA1, CPA2 and CPA4. May play a role in inflammation. The chain is Latexin (LXN) from Homo sapiens (Human).